Here is a 311-residue protein sequence, read N- to C-terminus: N-acetylmuramic acid 6-phosphate etherase (311 aa).

The 164-residue stretch at 66–229 folds into the SIS domain; it reads VADRMARGGR…STITMIRLGK (164 aa). The Proton donor role is filled by E94. E125 is an active-site residue.

This sequence belongs to the GCKR-like family. MurNAc-6-P etherase subfamily. Homodimer.

It carries out the reaction N-acetyl-D-muramate 6-phosphate + H2O = N-acetyl-D-glucosamine 6-phosphate + (R)-lactate. Its pathway is amino-sugar metabolism; N-acetylmuramate degradation. In terms of biological role, specifically catalyzes the cleavage of the D-lactyl ether substituent of MurNAc 6-phosphate, producing GlcNAc 6-phosphate and D-lactate. The protein is N-acetylmuramic acid 6-phosphate etherase of Streptomyces avermitilis (strain ATCC 31267 / DSM 46492 / JCM 5070 / NBRC 14893 / NCIMB 12804 / NRRL 8165 / MA-4680).